Here is a 295-residue protein sequence, read N- to C-terminus: Oxidoreductase AN1597 (295 aa).

The protein belongs to the asaB hydroxylase/desaturase family.

The protein operates within secondary metabolite biosynthesis; terpenoid biosynthesis. Functionally, oxidoreductase; part of the gene cluster that mediates the biosynthesis of the diterpene ent-pimara-8(14),15-diene (PD). Within the cluster, the HMG-CoA reductase AN1593 functions in the mevalonate pathway, which produces isoprenoid precursors. The geranylgeranyl pyrophosphate (GGPP) synthase AN1592 is needed in the formation of GGPP, the precursor for diterpenes. Lastly, the pimaradiene synthase pbcA performs the 2 cyclization steps that convert GGPP to ent-pimara-8(14),15-diene. The putative roles of the remaining cluster enzymes in ent-pimara-8(14),15-diene biosynthesis is unclear. The cytochrome P450 monooxygenase AN1598, the glutathione S-transferase AN1595, the oxidoreductases AN1596 and AN1597 probably function as decorative enzymes. It is possible that in biological conditions the compound is oxidized to ent-pimara-8(14),15-dien-19-oic acid, which is a bioactive diterpene compound predominant in many plant extracts. This is Oxidoreductase AN1597 from Emericella nidulans (strain FGSC A4 / ATCC 38163 / CBS 112.46 / NRRL 194 / M139) (Aspergillus nidulans).